Here is a 321-residue protein sequence, read N- to C-terminus: Lipoyl synthase (321 aa).

[4Fe-4S] cluster contacts are provided by cysteine 60, cysteine 65, cysteine 71, cysteine 86, cysteine 90, cysteine 93, and serine 299. Positions 72 to 288 constitute a Radical SAM core domain; the sequence is WEKKHATFMI…ETIGRTKGFL (217 aa).

This sequence belongs to the radical SAM superfamily. Lipoyl synthase family. It depends on [4Fe-4S] cluster as a cofactor.

It localises to the cytoplasm. The catalysed reaction is [[Fe-S] cluster scaffold protein carrying a second [4Fe-4S](2+) cluster] + N(6)-octanoyl-L-lysyl-[protein] + 2 oxidized [2Fe-2S]-[ferredoxin] + 2 S-adenosyl-L-methionine + 4 H(+) = [[Fe-S] cluster scaffold protein] + N(6)-[(R)-dihydrolipoyl]-L-lysyl-[protein] + 4 Fe(3+) + 2 hydrogen sulfide + 2 5'-deoxyadenosine + 2 L-methionine + 2 reduced [2Fe-2S]-[ferredoxin]. It functions in the pathway protein modification; protein lipoylation via endogenous pathway; protein N(6)-(lipoyl)lysine from octanoyl-[acyl-carrier-protein]: step 2/2. Its function is as follows. Catalyzes the radical-mediated insertion of two sulfur atoms into the C-6 and C-8 positions of the octanoyl moiety bound to the lipoyl domains of lipoate-dependent enzymes, thereby converting the octanoylated domains into lipoylated derivatives. The polypeptide is Lipoyl synthase (Brucella anthropi (strain ATCC 49188 / DSM 6882 / CCUG 24695 / JCM 21032 / LMG 3331 / NBRC 15819 / NCTC 12168 / Alc 37) (Ochrobactrum anthropi)).